Consider the following 317-residue polypeptide: MGLCKCPKKKVTNLFCFKHRVNVCEHCLVSNHNKCIVQSYLQWLQDSDYNPNCSLCIQPLDSQDTVRLVCYDLFHWSCLNELASHQPLNTAPDGYQCPTCQGPVFPPRNLASPVADMLREQLSSVNWARAGLGLPLIEDPEEEETTTHSGTSFSEWSTFETTSVDVSMSNPTLTSLPPHQDGEHIYNNREQSAPNNTVFNMVTTSATDTVTISTVTSPRKLYDTRDLGHSAVMQIDFDDDKYRRRPALNWFAQVLKNCTSTKKKTLALKHRIFLLLLFGVIGFFTLIIIMAKFGRASAETDPNLDPLLNPNIRIGNM.

A B box-type; degenerate zinc finger spans residues 1 to 43 (MGLCKCPKKKVTNLFCFKHRVNVCEHCLVSNHNKCIVQSYLQW). Residues 1–271 (MGLCKCPKKK…KKKTLALKHR (271 aa)) lie on the Cytoplasmic side of the membrane. An RING-type; degenerate zinc finger spans residues 53–101 (CSLCIQPLDSQDTVRLVCYDLFHWSCLNELASHQPLNTAPDGYQCPTCQ). A helical transmembrane segment spans residues 272 to 292 (IFLLLLFGVIGFFTLIIIMAK). Over 293–317 (FGRASAETDPNLDPLLNPNIRIGNM) the chain is Lumenal.

This sequence belongs to the ZFPL1 family.

The protein resides in the golgi apparatus. Its subcellular location is the cis-Golgi network membrane. In terms of biological role, required for cis-Golgi integrity and efficient ER to Golgi transport. This Danio rerio (Zebrafish) protein is Zinc finger protein-like 1 (zfpl1).